Here is a 182-residue protein sequence, read N- to C-terminus: UPF0690 protein C1orf52 (182 aa).

Disordered stretches follow at residues 1 to 67 (MAAE…RSVT) and 100 to 182 (WKSN…KKKK). Residues 23–32 (SDEEDNIEPE) show a composition bias toward acidic residues. Residues 50 to 63 (NKAEKRLPGPDELF) are compositionally biased toward basic and acidic residues. Residue threonine 67 is modified to Phosphothreonine. The residue at position 132 (tyrosine 132) is a Phosphotyrosine. Positions 151–162 (EGEETLESDDEK) are enriched in acidic residues. Serine 158 is modified (phosphoserine). The span at 172–182 (VEPGEPAKKKK) shows a compositional bias: basic and acidic residues.

The protein belongs to the UPF0690 family. Expressed in all tissues tested including heart, placenta, liver, skeletal muscle, kidney and pancreas. Weak expression in brain and lung.

The sequence is that of UPF0690 protein C1orf52 (C1orf52) from Homo sapiens (Human).